The chain runs to 295 residues: Lipase 2 (295 aa).

The N-terminal stretch at 1-31 (MPKPALRRVMTATVAAVGTLALGLTDATAHA) is a signal peptide. S48 acts as the Nucleophile in catalysis. 3 disulfide bridges follow: C65-C89, C138-C152, and C205-C254. Residue H275 is part of the active site.

It belongs to the 'GDSL' lipolytic enzyme family. Monomer.

The protein localises to the secreted. The catalysed reaction is a triacylglycerol + H2O = a diacylglycerol + a fatty acid + H(+). Its activity is regulated as follows. Strongly inhibited by Ag(+). The cations Ca(2+) and Mg(2+) do not significantly reduce the lipolytic activity of SCO7513, whereas high concentrations of Co(2+) and Cu(2+) partially inhibit it. Is not inhibited by DTT in vitro. Is resistant to PMSF inhibition, except in the presence of Ca(2+). Its function is as follows. Catalyzes the hydrolysis of fatty acid esters with a preference for long chain fatty acids (C16-C18). This is Lipase 2 from Streptomyces coelicolor (strain ATCC BAA-471 / A3(2) / M145).